The sequence spans 157 residues: 3-hydroxybutyryl-CoA dehydratase (157 aa).

A MaoC-like domain is found at 22–120 (KKEISSSDVV…IPERRRARLA (99 aa)).

The enzyme catalyses (3R)-3-hydroxybutanoyl-CoA = (2E)-butenoyl-CoA + H2O. Functionally, involved in the regeneration of glyoxylate from a molecule of acetyl-CoA. This is 3-hydroxybutyryl-CoA dehydratase from Methylorubrum extorquens (strain ATCC 14718 / DSM 1338 / JCM 2805 / NCIMB 9133 / AM1) (Methylobacterium extorquens).